The chain runs to 430 residues: Adenylosuccinate synthetase (430 aa).

GTP contacts are provided by residues glycine 12 to lysine 18 and glycine 40 to threonine 42. The active-site Proton acceptor is aspartate 13. Positions 13 and 40 each coordinate Mg(2+). Residues aspartate 13 to lysine 16, asparagine 38 to histidine 41, threonine 128, arginine 142, glutamine 223, threonine 238, and arginine 302 each bind IMP. The Proton donor role is filled by histidine 41. Position 298–304 (threonine 298–arginine 304) interacts with substrate. Residues arginine 304, serine 330–aspartate 332, and serine 412–glycine 414 contribute to the GTP site.

Belongs to the adenylosuccinate synthetase family. In terms of assembly, homodimer. It depends on Mg(2+) as a cofactor.

The protein resides in the cytoplasm. It carries out the reaction IMP + L-aspartate + GTP = N(6)-(1,2-dicarboxyethyl)-AMP + GDP + phosphate + 2 H(+). It participates in purine metabolism; AMP biosynthesis via de novo pathway; AMP from IMP: step 1/2. Its function is as follows. Plays an important role in the de novo pathway of purine nucleotide biosynthesis. Catalyzes the first committed step in the biosynthesis of AMP from IMP. This Streptococcus equi subsp. zooepidemicus (strain H70) protein is Adenylosuccinate synthetase.